A 163-amino-acid chain; its full sequence is Succinate dehydrogenase assembly factor 2-B, mitochondrial (163 aa).

A mitochondrion-targeting transit peptide spans 1-23 (MFRQLRLTMDISGWIFMPWRRSL).

The protein belongs to the SDHAF2 family. In terms of assembly, interacts with the flavoprotein subunit within the SDH catalytic dimer.

Its subcellular location is the mitochondrion matrix. Plays an essential role in the assembly of succinate dehydrogenase (SDH), an enzyme complex (also referred to as respiratory complex II) that is a component of both the tricarboxylic acid (TCA) cycle and the mitochondrial electron transport chain, and which couples the oxidation of succinate to fumarate with the reduction of ubiquinone (coenzyme Q) to ubiquinol. Required for flavinylation (covalent attachment of FAD) of the flavoprotein subunit of the SDH catalytic dimer. The protein is Succinate dehydrogenase assembly factor 2-B, mitochondrial of Drosophila ananassae (Fruit fly).